A 772-amino-acid chain; its full sequence is Semaphorin-3A (772 aa).

The N-terminal stretch at M1 to A20 is a signal peptide. Positions R31–L514 constitute a Sema domain. N53 is a glycosylation site (N-linked (GlcNAc...) asparagine). C103 and C114 form a disulfide bridge. An N-linked (GlcNAc...) asparagine glycan is attached at N125. Disulfide bonds link C132–C141, C269–C381, C293–C341, and C517–C535. Residues H577–T665 form the Ig-like C2-type domain. N591 carries N-linked (GlcNAc...) asparagine glycosylation. C650 and C723 form a disulfide bridge. The span at L677–E691 shows a compositional bias: basic and acidic residues. Disordered regions lie at residues L677–P698 and R729–V772. Basic residues predominate over residues R729–P738. Residues H750 to V772 show a composition bias toward basic and acidic residues.

This sequence belongs to the semaphorin family. As to quaternary structure, interacts with PLXND1. In terms of tissue distribution, expressed in the dorsal root ganglia.

It localises to the secreted. In terms of biological role, may be involved in guiding growing axons towards their targets by forming a molecular boundary that instructs axons to engage in the formation of specific nerve tracts. Binds to neuropilin. Involved in the development of the olfactory system and in neuronal control of puberty. In Rattus norvegicus (Rat), this protein is Semaphorin-3A (Sema3a).